The chain runs to 410 residues: Peptidase T (410 aa).

H78 contributes to the Zn(2+) binding site. D80 is an active-site residue. D140 serves as a coordination point for Zn(2+). The Proton acceptor role is filled by E174. Residues E175, D197, and H379 each contribute to the Zn(2+) site.

It belongs to the peptidase M20B family. Zn(2+) serves as cofactor.

It is found in the cytoplasm. It carries out the reaction Release of the N-terminal residue from a tripeptide.. Its function is as follows. Cleaves the N-terminal amino acid of tripeptides. This is Peptidase T from Vibrio atlanticus (strain LGP32) (Vibrio splendidus (strain Mel32)).